We begin with the raw amino-acid sequence, 259 residues long: Ubiquinone/menaquinone biosynthesis C-methyltransferase UbiE (259 aa).

S-adenosyl-L-methionine contacts are provided by residues threonine 82, aspartate 103, 131–132, and serine 148; that span reads NA.

It belongs to the class I-like SAM-binding methyltransferase superfamily. MenG/UbiE family.

It catalyses the reaction a 2-demethylmenaquinol + S-adenosyl-L-methionine = a menaquinol + S-adenosyl-L-homocysteine + H(+). The enzyme catalyses a 2-methoxy-6-(all-trans-polyprenyl)benzene-1,4-diol + S-adenosyl-L-methionine = a 5-methoxy-2-methyl-3-(all-trans-polyprenyl)benzene-1,4-diol + S-adenosyl-L-homocysteine + H(+). It participates in quinol/quinone metabolism; menaquinone biosynthesis; menaquinol from 1,4-dihydroxy-2-naphthoate: step 2/2. The protein operates within cofactor biosynthesis; ubiquinone biosynthesis. Methyltransferase required for the conversion of demethylmenaquinol (DMKH2) to menaquinol (MKH2) and the conversion of 2-polyprenyl-6-methoxy-1,4-benzoquinol (DDMQH2) to 2-polyprenyl-3-methyl-6-methoxy-1,4-benzoquinol (DMQH2). The polypeptide is Ubiquinone/menaquinone biosynthesis C-methyltransferase UbiE (Vibrio campbellii (strain ATCC BAA-1116)).